Here is a 469-residue protein sequence, read N- to C-terminus: UDP-glycosyltransferase 75B1 (469 aa).

Residue His-16 is the Proton acceptor of the active site. His-16 contacts an anthocyanidin. UDP-alpha-D-glucose is bound by residues Gln-334, His-349, Trp-352, Ser-354, Glu-357, Asp-373, and Gln-374.

Belongs to the UDP-glycosyltransferase family. As to quaternary structure, interacts with CALS1, ROP1 and phragmoplastin.

It is found in the cytoplasm. The protein resides in the perinuclear region. It localises to the cytoskeleton. The protein localises to the phragmoplast. The enzyme catalyses (indol-3-yl)acetate + UDP-alpha-D-glucose = 1-O-(indol-3-ylacetyl)-beta-D-glucose + UDP. The protein operates within plant hormone metabolism; auxin conjugation. Functionally, possesses low catalytic activity on indole-3-acetic acid (IAA) in vitro. May transfer UDP-glucose from sucrose synthase to callose synthase for the synthesis of callose at the forming cell plate during cytokinesis. Has high affinity for 4-aminobenzoate. Catalyzes the formation of 4-aminobenzoate glucose ester which represents a storage form of 4-aminobenzoate in the vacuole. Is the major source of this activity in the plant. Also active in vitro on benzoates and benzoate derivatives. The sequence is that of UDP-glycosyltransferase 75B1 (UGT75B1) from Arabidopsis thaliana (Mouse-ear cress).